Here is a 154-residue protein sequence, read N- to C-terminus: UPF0756 membrane protein YtwI (154 aa).

A run of 4 helical transmembrane segments spans residues 8–28 (FLIL…LFAV), 54–74 (WGVT…EIGF), 87–107 (WIAL…LTLL), and 117–137 (LVIG…GPLI).

Belongs to the UPF0756 family.

It localises to the cell membrane. The protein is UPF0756 membrane protein YtwI (ytwI) of Bacillus subtilis (strain 168).